Here is an 81-residue protein sequence, read N- to C-terminus: Accessory gland protein Acp63F (81 aa).

Positions 1 to 16 (MKAIIVFILFISSVHA) are cleaved as a signal peptide.

Main cells of accessory gland and seminal fluid.

Its subcellular location is the secreted. In terms of biological role, responsible for physiological and behavioral changes in mated female flies. The chain is Accessory gland protein Acp63F (Acp63F) from Drosophila melanogaster (Fruit fly).